A 195-amino-acid chain; its full sequence is 3-isopropylmalate dehydratase small subunit (195 aa).

Belongs to the LeuD family. LeuD type 1 subfamily. Heterodimer of LeuC and LeuD.

The catalysed reaction is (2R,3S)-3-isopropylmalate = (2S)-2-isopropylmalate. Its pathway is amino-acid biosynthesis; L-leucine biosynthesis; L-leucine from 3-methyl-2-oxobutanoate: step 2/4. Its function is as follows. Catalyzes the isomerization between 2-isopropylmalate and 3-isopropylmalate, via the formation of 2-isopropylmaleate. In Frankia alni (strain DSM 45986 / CECT 9034 / ACN14a), this protein is 3-isopropylmalate dehydratase small subunit.